The primary structure comprises 648 residues: Protein associated with UVRAG as autophagy enhancer (648 aa).

Composition is skewed to polar residues over residues 131–146 (QESL…TSPS) and 157–173 (PHLT…SSSR). Residues 131–173 (QESLLKNPKTVATSPSPKEGSARSESPHLTASTDDGDARSSSR) form a disordered region. S144 carries the post-translational modification Phosphoserine. Positions 183-222 (ETFMLPADVEKENLHFYAADIIISVIENMKCNLPNQQQPE) are interaction with UVRAG. N6-acetyllysine is present on residues K469, K509, K519, K559, and K619.

Interacts with UVRAG; the interaction is direct and promotes association with the PI3K/PI3KC3 and HOPS complexes. Interacts with STX17. Phosphorylated by MTOR at Ser-144 under nutrient-rich conditions. Phosphorylation prevents acetylation by KAT5/TIP60 and impairs RUBCNL/PACER function and autophagosome maturation. Under autophagy induction, Phosphorylation by MTOR is repressed, enabling acetylation by KAT5/TIP60. Post-translationally, acetylated by KAT5/TIP60 under autophagy induction, promoting autophagosome maturation and lipid metabolism. Acetylation is prevented by phosphorylation by MTOR. Lys-469 and Lys-559 constitute the key sites for tuning function in autophagy.

It localises to the cytoplasmic vesicle. It is found in the autophagosome membrane. Its function is as follows. Regulator of autophagy that promotes autophagosome maturation by facilitating the biogenesis of phosphatidylinositol 3-phosphate (PtdIns(3)P) in late steps of autophagy. Acts by antagonizing RUBCN, thereby stimulating phosphatidylinositol 3-kinase activity of the PI3K/PI3KC3 complex. Following anchorage to the autophagosomal SNARE STX17, promotes the recruitment of PI3K/PI3KC3 and HOPS complexes to the autophagosome to regulate the fusion specificity of autophagosomes with late endosomes/lysosomes. Binds phosphoinositides phosphatidylinositol 3-phosphate (PtdIns(3)P), 4-phosphate (PtdIns(4)P) and 5-phosphate (PtdIns(5)P). In addition to its role in autophagy, acts as a regulator of lipid and glycogen homeostasis. May act as a tumor suppressor. The chain is Protein associated with UVRAG as autophagy enhancer from Mus musculus (Mouse).